The following is a 285-amino-acid chain: Sulfur carrier protein TtuD (285 aa).

Rhodanese domains lie at 20 to 127 (EDPK…PLTT) and 161 to 281 (KEGK…VPIA). Cysteine 240 bears the Cysteine persulfide mark.

Cys-240 can accept a sulfur atom as persulfide forms from cysteine desulfurases IscS and SufS.

It functions in the pathway tRNA modification. In terms of biological role, required for the efficient 2-thiolation of 5-methyluridine residue at position 54 in the T loop of tRNAs, leading to 5-methyl-2-thiouridine (m(5)s(2)U or s(2)T). TtuD is a sulfur carrier protein that has a role to direct sulfur flow from cysteine desulfurases to m(5)s(2)U synthesis in vivo. It enhances the cysteine desulfurase activity of IscS and SufS, as well as the formation of thiocarboxylated TtuB (TtuB-COSH) in the presence of these desulfurases. This is Sulfur carrier protein TtuD from Thermus thermophilus (strain ATCC BAA-163 / DSM 7039 / HB27).